The following is an 85-amino-acid chain: Phosphocarrier protein HPr (85 aa).

One can recognise an HPr domain in the interval methionine 1–glutamate 85. The active-site Pros-phosphohistidine intermediate is histidine 15.

It belongs to the HPr family.

The protein localises to the cytoplasm. General (non sugar-specific) component of the phosphoenolpyruvate-dependent sugar phosphotransferase system (sugar PTS). This major carbohydrate active-transport system catalyzes the phosphorylation of incoming sugar substrates concomitantly with their translocation across the cell membrane. The phosphoryl group from phosphoenolpyruvate (PEP) is transferred to the phosphoryl carrier protein HPr by enzyme I. Phospho-HPr then transfers it to the PTS EIIA domain. The chain is Phosphocarrier protein HPr (ptsH) from Haemophilus influenzae (strain ATCC 51907 / DSM 11121 / KW20 / Rd).